A 181-amino-acid polypeptide reads, in one-letter code: MQIVILREEIEIPKNVVVDLKGSIIKIKGPKGEVVKDFSFAKGIQISLDGNKIVLETTFANRRKKAVFYSIVSHIKNMITGVTKGYRYYLKIIYTHFPTSVKVVGNEVQITNLIGEKNTRRAQILEGVKVTVKGEDIVVEGPNLEAVAQTAANIESASKISGFDRRIFSDGIFIYKKEVIE.

This sequence belongs to the universal ribosomal protein uL6 family. As to quaternary structure, part of the 50S ribosomal subunit.

In terms of biological role, this protein binds to the 23S rRNA, and is important in its secondary structure. It is located near the subunit interface in the base of the L7/L12 stalk, and near the tRNA binding site of the peptidyltransferase center. The chain is Large ribosomal subunit protein uL6 from Saccharolobus solfataricus (strain ATCC 35092 / DSM 1617 / JCM 11322 / P2) (Sulfolobus solfataricus).